The sequence spans 340 residues: Phenylalanine--tRNA ligase alpha subunit (340 aa).

Position 251 (Glu-251) interacts with Mg(2+).

The protein belongs to the class-II aminoacyl-tRNA synthetase family. Phe-tRNA synthetase alpha subunit type 1 subfamily. As to quaternary structure, tetramer of two alpha and two beta subunits. Requires Mg(2+) as cofactor.

The protein localises to the cytoplasm. The catalysed reaction is tRNA(Phe) + L-phenylalanine + ATP = L-phenylalanyl-tRNA(Phe) + AMP + diphosphate + H(+). The chain is Phenylalanine--tRNA ligase alpha subunit from Porphyromonas gingivalis (strain ATCC 33277 / DSM 20709 / CIP 103683 / JCM 12257 / NCTC 11834 / 2561).